The chain runs to 362 residues: Phosphoserine aminotransferase (362 aa).

Residues S9 and R42 each coordinate L-glutamate. Pyridoxal 5'-phosphate contacts are provided by residues 76–77 (GR), W102, T153, D174, and Q197. The residue at position 198 (K198) is an N6-(pyridoxal phosphate)lysine. 239–240 (NT) is a binding site for pyridoxal 5'-phosphate.

It belongs to the class-V pyridoxal-phosphate-dependent aminotransferase family. SerC subfamily. Homodimer. Pyridoxal 5'-phosphate is required as a cofactor.

Its subcellular location is the cytoplasm. The enzyme catalyses O-phospho-L-serine + 2-oxoglutarate = 3-phosphooxypyruvate + L-glutamate. It catalyses the reaction 4-(phosphooxy)-L-threonine + 2-oxoglutarate = (R)-3-hydroxy-2-oxo-4-phosphooxybutanoate + L-glutamate. It participates in amino-acid biosynthesis; L-serine biosynthesis; L-serine from 3-phospho-D-glycerate: step 2/3. Its pathway is cofactor biosynthesis; pyridoxine 5'-phosphate biosynthesis; pyridoxine 5'-phosphate from D-erythrose 4-phosphate: step 3/5. In terms of biological role, catalyzes the reversible conversion of 3-phosphohydroxypyruvate to phosphoserine and of 3-hydroxy-2-oxo-4-phosphonooxybutanoate to phosphohydroxythreonine. This Citrobacter koseri (strain ATCC BAA-895 / CDC 4225-83 / SGSC4696) protein is Phosphoserine aminotransferase.